We begin with the raw amino-acid sequence, 355 residues long: DNA polymerase IV (355 aa).

One can recognise a UmuC domain in the interval isoleucine 4 to glycine 185. Mg(2+) is bound by residues aspartate 8 and aspartate 103. Glutamate 104 is an active-site residue.

This sequence belongs to the DNA polymerase type-Y family. As to quaternary structure, monomer. Mg(2+) serves as cofactor.

It is found in the cytoplasm. It catalyses the reaction DNA(n) + a 2'-deoxyribonucleoside 5'-triphosphate = DNA(n+1) + diphosphate. Its function is as follows. Poorly processive, error-prone DNA polymerase involved in untargeted mutagenesis. Copies undamaged DNA at stalled replication forks, which arise in vivo from mismatched or misaligned primer ends. These misaligned primers can be extended by PolIV. Exhibits no 3'-5' exonuclease (proofreading) activity. May be involved in translesional synthesis, in conjunction with the beta clamp from PolIII. This chain is DNA polymerase IV, found in Shewanella amazonensis (strain ATCC BAA-1098 / SB2B).